The primary structure comprises 340 residues: Cell invasion protein SipD (340 aa).

Disordered regions lie at residues 1 to 26 (MLNI…PSAS) and 57 to 76 (QAQQ…NDER). Residues 291–319 (FKAQEENLKTTLQTLTQKYSNANSLYDNL) are a coiled coil.

It belongs to the invasin protein D family.

It localises to the secreted. In terms of biological role, required for translocation of effector proteins via the type III secretion system SPI-1, which is essential for an efficient bacterial internalization. Probably acts by modulating the secretion of SipA, SipB, and SipC. This is Cell invasion protein SipD (sipD) from Salmonella typhi.